A 230-amino-acid chain; its full sequence is Large ribosomal subunit protein bL25 (230 aa).

Belongs to the bacterial ribosomal protein bL25 family. CTC subfamily. In terms of assembly, part of the 50S ribosomal subunit; part of the 5S rRNA/L5/L18/L25 subcomplex. Contacts the 5S rRNA. Binds to the 5S rRNA independently of L5 and L18.

This is one of the proteins that binds to the 5S RNA in the ribosome where it forms part of the central protuberance. The sequence is that of Large ribosomal subunit protein bL25 (rplY) from Rhodopseudomonas palustris (strain ATCC BAA-98 / CGA009).